Reading from the N-terminus, the 208-residue chain is FMN-dependent NADH:quinone oxidoreductase 4 (208 aa).

It belongs to the azoreductase type 1 family. In terms of assembly, homodimer. Requires FMN as cofactor.

The catalysed reaction is 2 a quinone + NADH + H(+) = 2 a 1,4-benzosemiquinone + NAD(+). It catalyses the reaction N,N-dimethyl-1,4-phenylenediamine + anthranilate + 2 NAD(+) = 2-(4-dimethylaminophenyl)diazenylbenzoate + 2 NADH + 2 H(+). Its function is as follows. Quinone reductase that provides resistance to thiol-specific stress caused by electrophilic quinones. Functionally, also exhibits azoreductase activity. Catalyzes the reductive cleavage of the azo bond in aromatic azo compounds to the corresponding amines. This chain is FMN-dependent NADH:quinone oxidoreductase 4, found in Bacillus cereus (strain ATCC 10987 / NRS 248).